Reading from the N-terminus, the 1183-residue chain is ATP-dependent helicase/nuclease subunit A (1183 aa).

One can recognise a UvrD-like helicase ATP-binding domain in the interval 3–461 (VQWTDEQQRA…IDLTKNFRSR (459 aa)). 24–31 (AAAGSGKT) serves as a coordination point for ATP. The 297-residue stretch at 473–769 (RQVMDEAVGE…RIMTIHQSKG (297 aa)) folds into the UvrD-like helicase C-terminal domain.

The protein belongs to the helicase family. AddA subfamily. Heterodimer of AddA and AddB/RexB. Requires Mg(2+) as cofactor.

The enzyme catalyses Couples ATP hydrolysis with the unwinding of duplex DNA by translocating in the 3'-5' direction.. It carries out the reaction ATP + H2O = ADP + phosphate + H(+). Functionally, the heterodimer acts as both an ATP-dependent DNA helicase and an ATP-dependent, dual-direction single-stranded exonuclease. Recognizes the chi site generating a DNA molecule suitable for the initiation of homologous recombination. The AddA nuclease domain is required for chi fragment generation; this subunit has the helicase and 3' -&gt; 5' nuclease activities. The chain is ATP-dependent helicase/nuclease subunit A from Exiguobacterium sibiricum (strain DSM 17290 / CCUG 55495 / CIP 109462 / JCM 13490 / 255-15).